A 177-amino-acid chain; its full sequence is Large ribosomal subunit protein uL6 (177 aa).

It belongs to the universal ribosomal protein uL6 family. In terms of assembly, part of the 50S ribosomal subunit.

Its function is as follows. This protein binds to the 23S rRNA, and is important in its secondary structure. It is located near the subunit interface in the base of the L7/L12 stalk, and near the tRNA binding site of the peptidyltransferase center. The polypeptide is Large ribosomal subunit protein uL6 (Albidiferax ferrireducens (strain ATCC BAA-621 / DSM 15236 / T118) (Rhodoferax ferrireducens)).